The chain runs to 246 residues: Phosphomannomutase 2 (246 aa).

Residue Ala-2 is modified to N-acetylalanine. Asp-12 functions as the Nucleophile in the catalytic mechanism. Positions 12 and 14 each coordinate Mg(2+). Asp-14 serves as the catalytic Proton donor/acceptor. Alpha-D-mannose 1-phosphate contacts are provided by Arg-21, Arg-123, Arg-134, Arg-141, Ser-179, and Asp-181. The Mg(2+) site is built by Asp-209, Phe-221, Asp-223, and Thr-226.

The protein belongs to the eukaryotic PMM family. Homodimer.

Its subcellular location is the cytoplasm. The catalysed reaction is alpha-D-mannose 1-phosphate = D-mannose 6-phosphate. Its pathway is nucleotide-sugar biosynthesis; GDP-alpha-D-mannose biosynthesis; alpha-D-mannose 1-phosphate from D-fructose 6-phosphate: step 2/2. In terms of biological role, involved in the synthesis of the GDP-mannose and dolichol-phosphate-mannose required for a number of critical mannosyl transfer reactions. This is Phosphomannomutase 2 (PMM2) from Bos taurus (Bovine).